The sequence spans 703 residues: Calpain-8 (703 aa).

Positions 45-344 (LFKDPEFPAC…YSRLEICNLS (300 aa)) constitute a Calpain catalytic domain. Residues cysteine 105, histidine 262, and asparagine 286 contribute to the active site. The tract at residues 355-512 (KWNLVLFNGR…VFSEKKAKAL (158 aa)) is domain III. The interval 513–531 (EIGDTVSGHPHEPHPRDMD) is linker. 4 consecutive EF-hand domains span residues 532 to 566 (EEDE…VLSK), 575 to 608 (FNIN…LKIR), 605 to 640 (LKIR…AGFT), and 670 to 703 (IRLE…CVLV). The segment at 532 to 703 (EEDEHVRSLF…LAEWLCCVLV (172 aa)) is domain IV. Positions 588, 590, 592, 594, 599, 618, 620, 624, and 629 each coordinate Ca(2+).

It belongs to the peptidase C2 family. In terms of assembly, monomer and homooligomer. Interacts with COPS1/GPS1, COPB1, EYA2, NME2, NME4 and TOMM70. It depends on Ca(2+) as a cofactor. Post-translationally, undergoes autolytic cleavage between Ala-5 and Ala-6 which gives rise to fragments extending from Ala-6 to the C-terminus, Ala-6 to the EF-hand 2 domain and from Ala-6 to the beginning of domain III. As to expression, predominantly expressed in the stomach. Localizes strictly to the surface mucus cells in the gastric epithelium and the mucus-secreting goblet cells in the duodenum. Detected in the pituitary after estrogen stimulation.

It is found in the cytoplasm. The protein resides in the golgi apparatus. The enzyme catalyses Broad endopeptidase specificity.. Calcium-regulated non-lysosomal thiol-protease. Involved in membrane trafficking in the gastric surface mucus cells (pit cells) and may involve the membrane trafficking of mucus cells via interactions with coat protein. Proteolytically cleaves the beta-subunit of coatomer complex. The sequence is that of Calpain-8 (Capn8) from Rattus norvegicus (Rat).